The primary structure comprises 396 residues: Maltose/maltodextrin-binding periplasmic protein (396 aa).

The signal sequence occupies residues 1–26; it reads MKIKTGVGILALSALTTMMISAPALA.

It belongs to the bacterial solute-binding protein 1 family. As to quaternary structure, the complex is composed of two ATP-binding proteins (MalK), two transmembrane proteins (MalG and MalF) and a solute-binding protein (MalE).

It is found in the periplasm. Functionally, part of the ABC transporter complex MalEFGK involved in maltose/maltodextrin import. Binds maltose and higher maltodextrins. This chain is Maltose/maltodextrin-binding periplasmic protein (malE), found in Salmonella typhimurium (strain LT2 / SGSC1412 / ATCC 700720).